We begin with the raw amino-acid sequence, 181 residues long: TATA-box-binding protein (181 aa).

2 repeat units span residues 7–83 and 98–173.

It belongs to the TBP family.

Functionally, general factor that plays a role in the activation of archaeal genes transcribed by RNA polymerase. Binds specifically to the TATA box promoter element which lies close to the position of transcription initiation. The chain is TATA-box-binding protein from Methanococcus aeolicus (strain ATCC BAA-1280 / DSM 17508 / OCM 812 / Nankai-3).